The following is a 201-amino-acid chain: Holliday junction branch migration complex subunit RuvA (201 aa).

A domain I region spans residues 1–61 (MIEFVKGTID…EDAFSLYGFS (61 aa)). A domain II region spans residues 62 to 140 (TREEKALFTK…DVVPEMIDNL (79 aa)). The flexible linker stretch occupies residues 141 to 150 (FNHEARIEKQ). The segment at 151–201 (EAETALDEALEALRVLGYAEKEIKKVLPHLKEETALSTDQYVKKALQKLLK) is domain III.

It belongs to the RuvA family. In terms of assembly, homotetramer. Forms an RuvA(8)-RuvB(12)-Holliday junction (HJ) complex. HJ DNA is sandwiched between 2 RuvA tetramers; dsDNA enters through RuvA and exits via RuvB. An RuvB hexamer assembles on each DNA strand where it exits the tetramer. Each RuvB hexamer is contacted by two RuvA subunits (via domain III) on 2 adjacent RuvB subunits; this complex drives branch migration. In the full resolvosome a probable DNA-RuvA(4)-RuvB(12)-RuvC(2) complex forms which resolves the HJ.

It is found in the cytoplasm. Its function is as follows. The RuvA-RuvB-RuvC complex processes Holliday junction (HJ) DNA during genetic recombination and DNA repair, while the RuvA-RuvB complex plays an important role in the rescue of blocked DNA replication forks via replication fork reversal (RFR). RuvA specifically binds to HJ cruciform DNA, conferring on it an open structure. The RuvB hexamer acts as an ATP-dependent pump, pulling dsDNA into and through the RuvAB complex. HJ branch migration allows RuvC to scan DNA until it finds its consensus sequence, where it cleaves and resolves the cruciform DNA. The sequence is that of Holliday junction branch migration complex subunit RuvA from Bacillus velezensis (strain DSM 23117 / BGSC 10A6 / LMG 26770 / FZB42) (Bacillus amyloliquefaciens subsp. plantarum).